A 308-amino-acid chain; its full sequence is tRNA pseudouridine synthase B (308 aa).

The active-site Nucleophile is aspartate 49.

The protein belongs to the pseudouridine synthase TruB family. Type 1 subfamily.

It carries out the reaction uridine(55) in tRNA = pseudouridine(55) in tRNA. Its function is as follows. Responsible for synthesis of pseudouridine from uracil-55 in the psi GC loop of transfer RNAs. This is tRNA pseudouridine synthase B from Nitrosococcus oceani (strain ATCC 19707 / BCRC 17464 / JCM 30415 / NCIMB 11848 / C-107).